Consider the following 309-residue polypeptide: Ribonuclease Z (309 aa).

Positions 63, 65, 67, 68, 145, 216, and 274 each coordinate Zn(2+). Aspartate 67 (proton acceptor) is an active-site residue.

Belongs to the RNase Z family. Homodimer. Zn(2+) is required as a cofactor.

The catalysed reaction is Endonucleolytic cleavage of RNA, removing extra 3' nucleotides from tRNA precursor, generating 3' termini of tRNAs. A 3'-hydroxy group is left at the tRNA terminus and a 5'-phosphoryl group is left at the trailer molecule.. In terms of biological role, zinc phosphodiesterase, which displays some tRNA 3'-processing endonuclease activity. Probably involved in tRNA maturation, by removing a 3'-trailer from precursor tRNA. The polypeptide is Ribonuclease Z (Streptococcus mutans serotype c (strain ATCC 700610 / UA159)).